Consider the following 235-residue polypeptide: Large ribosomal subunit protein uL1 (235 aa).

Belongs to the universal ribosomal protein uL1 family. In terms of assembly, part of the 50S ribosomal subunit.

Its function is as follows. Binds directly to 23S rRNA. The L1 stalk is quite mobile in the ribosome, and is involved in E site tRNA release. Functionally, protein L1 is also a translational repressor protein, it controls the translation of the L11 operon by binding to its mRNA. This is Large ribosomal subunit protein uL1 from Prochlorococcus marinus (strain MIT 9301).